The primary structure comprises 184 residues: Probable sensory rhodopsin transducer (184 aa).

The next 2 helical transmembrane spans lie at 14 to 34 (TLGVGAVLVLVLATLAVVNVY) and 52 to 72 (GLVSILLIVAVALLFVATIIG). An HAMP domain is found at 73–125 (RERTAAVETLAAQARQIEQGELDVDLATNRTDDVGDIYRALAVLRDSEQLDRQ).

It belongs to the methyl-accepting chemotaxis (MCP) protein family. Interacts with Xop2/SRM.

It localises to the membrane. Functionally, the HtrM-Xop2/SRM complex may interact with CheB or CheR and modulate their availability to Sop1 or Sop2. The chain is Probable sensory rhodopsin transducer (htrM) from Haloarcula marismortui (strain ATCC 43049 / DSM 3752 / JCM 8966 / VKM B-1809) (Halobacterium marismortui).